The sequence spans 154 residues: UPF0178 protein SSP2038 (154 aa).

This sequence belongs to the UPF0178 family.

This chain is UPF0178 protein SSP2038, found in Staphylococcus saprophyticus subsp. saprophyticus (strain ATCC 15305 / DSM 20229 / NCIMB 8711 / NCTC 7292 / S-41).